Here is a 150-residue protein sequence, read N- to C-terminus: Large ribosomal subunit protein bL9 (150 aa).

It belongs to the bacterial ribosomal protein bL9 family.

Functionally, binds to the 23S rRNA. The sequence is that of Large ribosomal subunit protein bL9 from Ralstonia nicotianae (strain ATCC BAA-1114 / GMI1000) (Ralstonia solanacearum).